Reading from the N-terminus, the 197-residue chain is HTH-type transcriptional regulator BetI (197 aa).

Residues 8-68 (PIRRQQLIQA…ATMRHLMNAL (61 aa)) form the HTH tetR-type domain. The H-T-H motif DNA-binding region spans 31–50 (SIALIARLAGVSNGIISHYF).

The protein operates within amine and polyamine biosynthesis; betaine biosynthesis via choline pathway [regulation]. Its function is as follows. Repressor involved in the biosynthesis of the osmoprotectant glycine betaine. It represses transcription of the choline transporter BetT and the genes of BetAB involved in the synthesis of glycine betaine. The polypeptide is HTH-type transcriptional regulator BetI (Pseudomonas savastanoi pv. phaseolicola (strain 1448A / Race 6) (Pseudomonas syringae pv. phaseolicola (strain 1448A / Race 6))).